We begin with the raw amino-acid sequence, 45 residues long: Bomanin Short 1 (45 aa).

The signal sequence occupies residues 1 to 20 (MKFFSVVTVFVLGLLAVANA). Residues 21-27 (VPLSPDP) constitute a propeptide, removed by a dipeptidylpeptidase. Cys36 and Cys39 are disulfide-bonded. Gly43 carries the post-translational modification Glycine amide.

As to expression, hemolymph (at protein level).

It is found in the secreted. In terms of biological role, secreted immune-induced peptide induced by Toll signaling. Has a role in resistance to bacterial and fungal infections. Has no activity against the fungus C.glabrata in vitro. In Drosophila melanogaster (Fruit fly), this protein is Bomanin Short 1.